The sequence spans 296 residues: NAD kinase (296 aa).

The active-site Proton acceptor is aspartate 72. NAD(+)-binding positions include 72–73 (DG), 146–147 (ND), arginine 157, lysine 174, aspartate 176, 187–192 (TAYALS), and glutamine 247.

It belongs to the NAD kinase family. A divalent metal cation is required as a cofactor.

Its subcellular location is the cytoplasm. The enzyme catalyses NAD(+) + ATP = ADP + NADP(+) + H(+). Involved in the regulation of the intracellular balance of NAD and NADP, and is a key enzyme in the biosynthesis of NADP. Catalyzes specifically the phosphorylation on 2'-hydroxyl of the adenosine moiety of NAD to yield NADP. The chain is NAD kinase from Pseudomonas entomophila (strain L48).